The chain runs to 360 residues: uncharacterized protein (360 aa).

A THUMP domain is found at 45-148 (EDIEDKILQI…KNKTYVSITP (104 aa)).

This is an uncharacterized protein from Methanocaldococcus jannaschii (strain ATCC 43067 / DSM 2661 / JAL-1 / JCM 10045 / NBRC 100440) (Methanococcus jannaschii).